The chain runs to 134 residues: Large-conductance mechanosensitive channel (134 aa).

2 helical membrane passes run 16 to 36 and 81 to 101; these read VIDL…VTAL and GDFL…FIIV.

This sequence belongs to the MscL family. As to quaternary structure, homopentamer.

The protein resides in the cell inner membrane. Functionally, channel that opens in response to stretch forces in the membrane lipid bilayer. May participate in the regulation of osmotic pressure changes within the cell. The chain is Large-conductance mechanosensitive channel from Xylella fastidiosa (strain M12).